Consider the following 354-residue polypeptide: 3-dehydroquinate synthase (354 aa).

Residues 66 to 71 (SGETSK), 100 to 104 (GATGD), 124 to 125 (TT), K136, K145, and 163 to 166 (FLET) contribute to the NAD(+) site. Zn(2+) contacts are provided by E178, H242, and H256.

Belongs to the sugar phosphate cyclases superfamily. Dehydroquinate synthase family. It depends on NAD(+) as a cofactor. Requires Co(2+) as cofactor. Zn(2+) is required as a cofactor.

It localises to the cytoplasm. The catalysed reaction is 7-phospho-2-dehydro-3-deoxy-D-arabino-heptonate = 3-dehydroquinate + phosphate. It participates in metabolic intermediate biosynthesis; chorismate biosynthesis; chorismate from D-erythrose 4-phosphate and phosphoenolpyruvate: step 2/7. Catalyzes the conversion of 3-deoxy-D-arabino-heptulosonate 7-phosphate (DAHP) to dehydroquinate (DHQ). The polypeptide is 3-dehydroquinate synthase (Staphylococcus epidermidis (strain ATCC 35984 / DSM 28319 / BCRC 17069 / CCUG 31568 / BM 3577 / RP62A)).